Here is a 314-residue protein sequence, read N- to C-terminus: Protoheme IX farnesyltransferase (314 aa).

8 helical membrane passes run 30–50 (VMSLVVFTALVGLQAAPVSVH), 51–71 (PVIGFASILFVAIGAGASGAL), 122–142 (FLAAGLLAFTIFFYAVIYSMW), 151–171 (IVIGGAAGAFPPVIGWVIATG), 178–198 (WLMFALIFMWTPPHFWALALF), 224–244 (IIAYTVLLAVLAVGTGFSAIG), 247–267 (VYLAAALVLNALFLKGAIDIW), and 285–305 (FFRLSLWYLFAHFGAILLESA).

Belongs to the UbiA prenyltransferase family. Protoheme IX farnesyltransferase subfamily. In terms of assembly, interacts with CtaA.

The protein resides in the cell inner membrane. The enzyme catalyses heme b + (2E,6E)-farnesyl diphosphate + H2O = Fe(II)-heme o + diphosphate. It participates in porphyrin-containing compound metabolism; heme O biosynthesis; heme O from protoheme: step 1/1. Converts heme B (protoheme IX) to heme O by substitution of the vinyl group on carbon 2 of heme B porphyrin ring with a hydroxyethyl farnesyl side group. The sequence is that of Protoheme IX farnesyltransferase from Roseobacter denitrificans (strain ATCC 33942 / OCh 114) (Erythrobacter sp. (strain OCh 114)).